Consider the following 503-residue polypeptide: Maturase K (503 aa).

It belongs to the intron maturase 2 family. MatK subfamily.

It is found in the plastid. Its subcellular location is the chloroplast. Its function is as follows. Usually encoded in the trnK tRNA gene intron. Probably assists in splicing its own and other chloroplast group II introns. The chain is Maturase K from Liquidambar formosana (Formosan gum).